We begin with the raw amino-acid sequence, 183 residues long: Protein jagunal homolog 1 (183 aa).

The Cytoplasmic portion of the chain corresponds to 1 to 39 (MASRAGPRAAGTDGSDFQHRERVAMHYQMSVTLKYEIKK). S3 is subject to Phosphoserine. Residues 40 to 60 (LIYVHLVIWLLLVAKMSVGHL) form a helical membrane-spanning segment. Residues 61 to 71 (RLLSHDQVAMP) are Lumenal-facing. A helical membrane pass occupies residues 72 to 92 (YQWEYPYLLSILPSLLGLLSF). Topologically, residues 93 to 96 (PRNN) are cytoplasmic. Residues 97-117 (ISYLVLSMISMGLFSIAPLIY) traverse the membrane as a helical segment. Residues 118-137 (GSMEMFPAAQQLYRHGKAYR) lie on the Lumenal side of the membrane. Residues 138 to 158 (FLFGFSAVSIMYLVLVLAVQV) form a helical membrane-spanning segment. Residues 159-183 (HAWQLYYSKKLLDSWFTSTQEKKHK) lie on the Cytoplasmic side of the membrane.

The protein belongs to the jagunal family. As to quaternary structure, interacts with COPA, COPB2 and COPG2. In terms of tissue distribution, ubiquitously expressed.

It is found in the endoplasmic reticulum membrane. In terms of biological role, endoplasmic reticulum transmembrane protein involved in vesicle-mediated transport, which is required for neutrophil function. Required for vesicle-mediated transport; it is however unclear whether it is involved in early secretory pathway or intracellular protein transport. Acts as a regulator of neutrophil function, probably via its role in vesicle-mediated transport: required for defense against fungal pathogens and for granulocyte colony-stimulating factor (GM-CSF) signaling pathway; possibly by regulating glycosylation and/or targeting of proteins contributing to the viability and migration of neutrophils. This chain is Protein jagunal homolog 1, found in Homo sapiens (Human).